The primary structure comprises 1782 residues: Atrochrysone carboxylic acid synthase (1782 aa).

Positions 41–270 are N-terminal acylcarrier protein transacylase domain (SAT); the sequence is HTYTKDRRYP…ALPVYGGLCH (230 aa). Residues 407–841 form the Ketosynthase family 3 (KS3) domain; sequence QSKIAIVGMS…GGNSTLAIEE (435 aa). Residues C580, H716, and H759 each act as for beta-ketoacyl synthase activity in the active site. Residues 946 to 1266 form a malonyl-CoA:ACP transacylase (MAT) domain region; the sequence is FAFTGQGSSY…LGILHCAGVP (321 aa). A product template (PT) domain region spans residues 1331–1648; the sequence is TSTVQQIIHE…RILLNRFFSA (318 aa). An N-terminal hotdog fold region spans residues 1335-1468; that stretch reads QQIIHEQYDG…ATVYYEEASD (134 aa). One can recognise a PKS/mFAS DH domain in the interval 1335-1643; it reads QQIIHEQYDG…FRRYPRILLN (309 aa). H1367 (proton acceptor; for dehydratase activity) is an active-site residue. Positions 1495-1643 are C-terminal hotdog fold; sequence VANRFTRRMA…FRRYPRILLN (149 aa). D1554 functions as the Proton donor; for dehydratase activity in the catalytic mechanism. The segment at 1653 to 1703 is disordered; it reads ARKSTPATSAPAPAPPAGSEALQPKAAPASTPAAPASADAPTTNGVKAAAE. The segment covering 1678 to 1695 has biased composition (low complexity); it reads AAPASTPAAPASADAPTT. Positions 1704-1781 constitute a Carrier domain; that stretch reads PDANSTAAKA…DLKSWLLEYY (78 aa). Residue S1741 is modified to O-(pantetheine 4'-phosphoryl)serine.

As to expression, specifically expressed in conidia.

It carries out the reaction holo-[ACP] + 8 malonyl-CoA + 8 H(+) = atrochrysone carboxyl-[ACP] + 8 CO2 + 8 CoA + 2 H2O. It functions in the pathway secondary metabolite biosynthesis. Functionally, non-reducing polyketide synthase; part of the gene cluster that mediates the biosynthesis of trypacidin, a mycotoxin with antiprotozoal activity and that plays a role in the infection process. The pathway begins with the synthesis of atrochrysone thioester by the polyketide synthase (PKS) tpcC. The atrochrysone carboxyl ACP thioesterase tpcB then breaks the thioester bond and releases the atrochrysone carboxylic acid from tpcC. The decarboxylase tpcK converts atrochrysone carboxylic acid to atrochrysone which is further reduced into emodin anthrone. The next step is performed by the emodin anthrone oxygenase tpcL that catalyzes the oxidation of emodin anthrone to emodin. Emodin O-methyltransferase encoded by tpcA catalyzes methylation of the 8-hydroxy group of emodin to form questin. Ring cleavage of questin by questin oxidase tpcI leads to desmethylsulochrin via several intermediates including questin epoxide. Another methylation step catalyzed by tpcM leads to the formation of sulochrin which is further converted to monomethylsulfochrin by tpcH. Finally, the tpcJ catalyzes the conversion of monomethylsulfochrin to trypacidin. Trypacidin is toxic for human pulmonary and bronchial epithelial cells by initiating the intracellular formation of nitric oxide (NO) and hydrogen peroxide (H(2)O(2)), thus triggering host necrotic cell death. The trypacidin pathway is also able to produce endocrocin via a distinct route from the endocrocin Enc pathway. The polypeptide is Atrochrysone carboxylic acid synthase (Aspergillus fumigatus (strain ATCC MYA-4609 / CBS 101355 / FGSC A1100 / Af293) (Neosartorya fumigata)).